A 634-amino-acid chain; its full sequence is Chaperone protein HtpG (634 aa).

Positions 1 to 345 are a; substrate-binding; that stretch reads MEHQQNHTFS…SNDLPLNVSR (345 aa). The interval 346–562 is b; that stretch reads EILQDTRVTA…NDDMSTQMAK (217 aa). The tract at residues 563-634 is c; the sequence is LMAQMGQPVP…VGRINKLLLA (72 aa).

This sequence belongs to the heat shock protein 90 family. In terms of assembly, homodimer.

It localises to the cytoplasm. In terms of biological role, molecular chaperone. Has ATPase activity. This Psychromonas ingrahamii (strain DSM 17664 / CCUG 51855 / 37) protein is Chaperone protein HtpG.